Here is a 226-residue protein sequence, read N- to C-terminus: ATP synthase F(0) complex subunit a (226 aa).

The next 7 membrane-spanning stretches (helical) occupy residues 11-31 (SPELLMIPTALLSMLVPVLLI), 37-54 (LLGNRMTTAIAWLLMTIM), 72-92 (LTSLLLMILLSNLLGLLPYTF), 98-118 (LSMNMAMAIPLWMATIITGMT), 138-158 (IPFMIIIETISLLMRPLALGV), 178-198 (TLNFITSHITLSIMTYLLLFL), and 199-219 (LCILELAVACIQAYVFVLLII).

It belongs to the ATPase A chain family. In terms of assembly, component of the ATP synthase complex composed at least of ATP5F1A/subunit alpha, ATP5F1B/subunit beta, ATP5MC1/subunit c (homooctomer), MT-ATP6/subunit a, MT-ATP8/subunit 8, ATP5ME/subunit e, ATP5MF/subunit f, ATP5MG/subunit g, ATP5MK/subunit k, ATP5MJ/subunit j, ATP5F1C/subunit gamma, ATP5F1D/subunit delta, ATP5F1E/subunit epsilon, ATP5PF/subunit F6, ATP5PB/subunit b, ATP5PD/subunit d, ATP5PO/subunit OSCP. ATP synthase complex consists of a soluble F(1) head domain (subunits alpha(3) and beta(3)) - the catalytic core - and a membrane F(0) domain - the membrane proton channel (subunits c, a, 8, e, f, g, k and j). These two domains are linked by a central stalk (subunits gamma, delta, and epsilon) rotating inside the F1 region and a stationary peripheral stalk (subunits F6, b, d, and OSCP). Interacts with DNAJC30; interaction is direct.

It localises to the mitochondrion inner membrane. The enzyme catalyses H(+)(in) = H(+)(out). In terms of biological role, subunit a, of the mitochondrial membrane ATP synthase complex (F(1)F(0) ATP synthase or Complex V) that produces ATP from ADP in the presence of a proton gradient across the membrane which is generated by electron transport complexes of the respiratory chain. ATP synthase complex consist of a soluble F(1) head domain - the catalytic core - and a membrane F(1) domain - the membrane proton channel. These two domains are linked by a central stalk rotating inside the F(1) region and a stationary peripheral stalk. During catalysis, ATP synthesis in the catalytic domain of F(1) is coupled via a rotary mechanism of the central stalk subunits to proton translocation. With the subunit c (ATP5MC1), forms the proton-conducting channel in the F(0) domain, that contains two crucial half-channels (inlet and outlet) that facilitate proton movement from the mitochondrial intermembrane space (IMS) into the matrix. Protons are taken up via the inlet half-channel and released through the outlet half-channel, following a Grotthuss mechanism. This Lycodon semicarinatus (Ryukyu odd-tooth snake) protein is ATP synthase F(0) complex subunit a.